A 263-amino-acid polypeptide reads, in one-letter code: Small ribosomal subunit protein eS4 (263 aa).

The S4 RNA-binding domain occupies 42-104; that stretch reads LPLIIFLRNR…TGEHFRLVYD (63 aa).

This sequence belongs to the eukaryotic ribosomal protein eS4 family. Component of the small ribosomal subunit.

It localises to the cytoplasm. Its function is as follows. Component of the small ribosomal subunit. The ribosome is a large ribonucleoprotein complex responsible for the synthesis of proteins in the cell. In Xenopus laevis (African clawed frog), this protein is Small ribosomal subunit protein eS4 (rps4).